We begin with the raw amino-acid sequence, 180 residues long: Large ribosomal subunit protein uL5 (180 aa).

It belongs to the universal ribosomal protein uL5 family. As to quaternary structure, part of the 50S ribosomal subunit; part of the 5S rRNA/L5/L18/L25 subcomplex. Contacts the 5S rRNA and the P site tRNA. Forms a bridge to the 30S subunit in the 70S ribosome.

Its function is as follows. This is one of the proteins that bind and probably mediate the attachment of the 5S RNA into the large ribosomal subunit, where it forms part of the central protuberance. In the 70S ribosome it contacts protein S13 of the 30S subunit (bridge B1b), connecting the 2 subunits; this bridge is implicated in subunit movement. Contacts the P site tRNA; the 5S rRNA and some of its associated proteins might help stabilize positioning of ribosome-bound tRNAs. The chain is Large ribosomal subunit protein uL5 from Lactobacillus acidophilus (strain ATCC 700396 / NCK56 / N2 / NCFM).